Consider the following 150-residue polypeptide: SsrA-binding protein (150 aa).

Belongs to the SmpB family.

The protein localises to the cytoplasm. Required for rescue of stalled ribosomes mediated by trans-translation. Binds to transfer-messenger RNA (tmRNA), required for stable association of tmRNA with ribosomes. tmRNA and SmpB together mimic tRNA shape, replacing the anticodon stem-loop with SmpB. tmRNA is encoded by the ssrA gene; the 2 termini fold to resemble tRNA(Ala) and it encodes a 'tag peptide', a short internal open reading frame. During trans-translation Ala-aminoacylated tmRNA acts like a tRNA, entering the A-site of stalled ribosomes, displacing the stalled mRNA. The ribosome then switches to translate the ORF on the tmRNA; the nascent peptide is terminated with the 'tag peptide' encoded by the tmRNA and targeted for degradation. The ribosome is freed to recommence translation, which seems to be the essential function of trans-translation. The chain is SsrA-binding protein from Thermotoga maritima (strain ATCC 43589 / DSM 3109 / JCM 10099 / NBRC 100826 / MSB8).